Here is a 1134-residue protein sequence, read N- to C-terminus: Vinculin (1134 aa).

Residues 1–835 (MPVFHTRTIE…GAVAKVREAF (835 aa)) are N-terminal globular head. Residue S97 is modified to Phosphoserine. A talin-interaction region spans residues 168 to 208 (MTKMAKMIDERQQELTHQEHRVMLVNSMNTVKELLPVLISA). K173 carries the post-translational modification N6-acetyllysine. 3 tandem repeats follow at residues 259-369 (ASKD…KVEN), 370-479 (AARK…KTNR), and 480-589 (AVAN…RMQE). A 3 X 112 AA tandem repeats region spans residues 259-589 (ASKDTEAMKR…LKDLKARMQE (331 aa)). Phosphoserine occurs at positions 260, 272, 275, 288, 290, 346, and 434. K496 carries the N6-acetyllysine modification. Y537 is subject to Phosphotyrosine. Residues S574, S579, and S600 each carry the phosphoserine modification. 2 positions are modified to phosphothreonine: T604 and T672. A Phosphoserine modification is found at S721. Residues 741–764 (MANIQPQMLVAGATSIARRANRIL) are interaction with ACTN4. A phosphoserine mark is found at S795 and S809. Y822 is subject to Phosphotyrosine. Residues 836–878 (QPQEPDFPPPPPDLEQLRLTDELAPPKPPLPEGEVPPPRPPPP) form a linker (Pro-rich) region. The disordered stretch occupies residues 857–887 (ELAPPKPPLPEGEVPPPRPPPPEEKDEEFPE). A compositionally biased stretch (pro residues) spans 860 to 876 (PPKPPLPEGEVPPPRPP). The C-terminal tail stretch occupies residues 879–1134 (EEKDEEFPEQ…RWVRKTPWYQ (256 aa)). Facilitates phospholipid membrane insertion stretches follow at residues 1003–1046 (RLVR…KRIR) and 1120–1134 (AGFT…PWYQ). Y1133 carries the post-translational modification Phosphotyrosine; by SRC-type Tyr-kinases.

Belongs to the vinculin/alpha-catenin family. Exhibits self-association properties. Part of a complex composed of THSD1, PTK2/FAK1, TLN1 and VCL. Interacts with APBB1IP and NRAP. Interacts with TLN1. Interacts with CTNNB1 and this interaction is necessary for its localization to the cell-cell junctions and for its function in regulating cell surface expression of E-cadherin. Interacts with SYNM. Interacts with SORBS1. Interacts with CTNNA1. Binds to ACTN4; this interaction triggers conformational changes. Interacts with FLII. As to quaternary structure, (Microbial infection) Interacts via its globular head domain with the central portion of S.flexneri IcsA (also called VirG). Post-translationally, phosphorylated; on serines, threonines and tyrosines. Phosphorylation on Tyr-1133 in activated platelets affects head-tail interactions and cell spreading but has no effect on actin binding nor on localization to focal adhesion plaques. Acetylated; mainly by myristic acid but also by a small amount of palmitic acid. As to expression, metavinculin is muscle-specific.

It localises to the cell membrane. It is found in the cell junction. Its subcellular location is the adherens junction. The protein resides in the focal adhesion. The protein localises to the cytoplasm. It localises to the cytoskeleton. It is found in the sarcolemma. Its subcellular location is the cell projection. The protein resides in the podosome. In terms of biological role, actin filament (F-actin)-binding protein involved in cell-matrix adhesion and cell-cell adhesion. Regulates cell-surface E-cadherin expression and potentiates mechanosensing by the E-cadherin complex. May also play important roles in cell morphology and locomotion. The sequence is that of Vinculin (VCL) from Homo sapiens (Human).